Consider the following 147-residue polypeptide: Bis(5'-nucleosyl)-tetraphosphatase [asymmetrical] (147 aa).

One can recognise a Nudix hydrolase domain in the interval 1 to 139 (MALRACGLII…EMKAALQEGH (139 aa)). An N-acetylalanine modification is found at Ala2. Positions 43–64 (GHVEPGEDDLETALRETQEEAG) match the Nudix box motif.

Belongs to the Nudix hydrolase family. It depends on a divalent metal cation as a cofactor.

It carries out the reaction P(1),P(4)-bis(5'-guanosyl) tetraphosphate + H2O = GMP + GTP + 2 H(+). It catalyses the reaction a 5'-end CoA-ribonucleoside in mRNA + H2O = a 5'-end phospho-adenosine-phospho-ribonucleoside in mRNA + (R)-4'-phosphopantetheine + 2 H(+). The catalysed reaction is a 5'-end FAD-phospho-ribonucleoside in mRNA + H2O = a 5'-end phospho-adenosine-phospho-ribonucleoside in mRNA + FMN + 2 H(+). In terms of biological role, catalyzes the asymmetric hydrolysis of diadenosine 5',5'''-P1,P4-tetraphosphate (Ap4A) to yield AMP and ATP. Exhibits decapping activity towards FAD-capped RNAs and dpCoA-capped RNAs in vitro. This Homo sapiens (Human) protein is Bis(5'-nucleosyl)-tetraphosphatase [asymmetrical] (NUDT2).